A 495-amino-acid polypeptide reads, in one-letter code: Amorpha-4,11-diene 12-monooxygenase (495 aa).

The Cytoplasmic segment spans residues 1 to 6 (MKSILK). Residues 7 to 29 (AMALSLTTSIALATILLFVYKFA) traverse the membrane as a helical; Signal-anchor for type II membrane protein segment. At 30–495 (TRSKSTKKSL…KTELLLVPSF (466 aa)) the chain is on the lumenal side. Asn-176, Asn-261, Asn-267, Asn-386, and Asn-417 each carry an N-linked (GlcNAc...) asparagine glycan. Cys-439 lines the heme pocket.

This sequence belongs to the cytochrome P450 family. The cofactor is heme. Highly expressed both in apical and sub-apical cells of glandular secretory trichomes. Detected in flower buds, leaves and roots. Also present in non-glandular trichome cells.

Its subcellular location is the endoplasmic reticulum membrane. It catalyses the reaction (+)-amorpha-4,11-diene + 3 reduced [NADPH--hemoprotein reductase] + 3 O2 = (+)-artemisinate + 3 oxidized [NADPH--hemoprotein reductase] + 4 H2O + 4 H(+). The protein operates within sesquiterpene biosynthesis. In terms of biological role, involved in the biosynthesis of the antimalarial endoperoxide artemisinin. Catalyzes three consecutive oxidations of amorpha-4,11-diene to produce artemisinic acid, with artemisinic alcohol and artemisinic aldehyde as intermediates products, but is unable to oxidize germacrene A. No activity with limonene, alpha-pinene, beta-pinene, pinocarveol, (-)-alloisolongifolene, caryophyllene, (-)-alpha-gurjunene, (+)-gamma-gurjunene, (+)-ledene, (+)-beta-selinene and (+)-valencene as substrates. The sequence is that of Amorpha-4,11-diene 12-monooxygenase from Artemisia annua (Sweet wormwood).